A 152-amino-acid chain; its full sequence is MDLVLSSQTDLTNYVKKVSIEDFGCQFLHTAHWNNRLRTTGGRFFPNDRHLDFNPKIYREFGIDIFRKIVRHELCHYHLYIQGKGYQHRDKAFKELLEKVDGLRYTPRVTAVKVNYHHYSCQSCGQVYRRRRRVNLRKFACGYCHGRLIESF.

Residues 13–148 (NYVKKVSIED…FACGYCHGRL (136 aa)) enclose the SprT-like domain. H72 is a binding site for Zn(2+). E73 is a catalytic residue. H76 contacts Zn(2+).

It belongs to the SprT family. Zn(2+) is required as a cofactor.

It localises to the cytoplasm. This Streptococcus agalactiae serotype III (strain NEM316) protein is Protein SprT-like.